Here is a 214-residue protein sequence, read N- to C-terminus: Probable chorismate pyruvate-lyase (214 aa).

3 residues coordinate substrate: R74, L112, and E173. The interval 183–214 is disordered; the sequence is AAPENTGAGGTRLPRRIDTHHTPSKQEERPES. The segment covering 197-214 has biased composition (basic and acidic residues); sequence RRIDTHHTPSKQEERPES.

It belongs to the UbiC family.

The protein resides in the cytoplasm. It catalyses the reaction chorismate = 4-hydroxybenzoate + pyruvate. It functions in the pathway cofactor biosynthesis; ubiquinone biosynthesis. Functionally, removes the pyruvyl group from chorismate, with concomitant aromatization of the ring, to provide 4-hydroxybenzoate (4HB) for the ubiquinone pathway. The protein is Probable chorismate pyruvate-lyase of Cupriavidus metallidurans (strain ATCC 43123 / DSM 2839 / NBRC 102507 / CH34) (Ralstonia metallidurans).